The following is a 171-amino-acid chain: 3-hydroxydecanoyl-[acyl-carrier-protein] dehydratase (171 aa).

His70 is an active-site residue.

Belongs to the thioester dehydratase family. FabA subfamily. Homodimer.

It localises to the cytoplasm. It carries out the reaction a (3R)-hydroxyacyl-[ACP] = a (2E)-enoyl-[ACP] + H2O. It catalyses the reaction (3R)-hydroxydecanoyl-[ACP] = (2E)-decenoyl-[ACP] + H2O. The enzyme catalyses (2E)-decenoyl-[ACP] = (3Z)-decenoyl-[ACP]. The protein operates within lipid metabolism; fatty acid biosynthesis. Necessary for the introduction of cis unsaturation into fatty acids. Catalyzes the dehydration of (3R)-3-hydroxydecanoyl-ACP to E-(2)-decenoyl-ACP and then its isomerization to Z-(3)-decenoyl-ACP. Can catalyze the dehydratase reaction for beta-hydroxyacyl-ACPs with saturated chain lengths up to 16:0, being most active on intermediate chain length. The chain is 3-hydroxydecanoyl-[acyl-carrier-protein] dehydratase from Stutzerimonas stutzeri (strain A1501) (Pseudomonas stutzeri).